Reading from the N-terminus, the 420-residue chain is ATP phosphoribosyltransferase regulatory subunit (420 aa).

It belongs to the class-II aminoacyl-tRNA synthetase family. HisZ subfamily. Heteromultimer composed of HisG and HisZ subunits.

It is found in the cytoplasm. The protein operates within amino-acid biosynthesis; L-histidine biosynthesis; L-histidine from 5-phospho-alpha-D-ribose 1-diphosphate: step 1/9. In terms of biological role, required for the first step of histidine biosynthesis. May allow the feedback regulation of ATP phosphoribosyltransferase activity by histidine. In Bacillus cereus (strain ZK / E33L), this protein is ATP phosphoribosyltransferase regulatory subunit.